The chain runs to 383 residues: DNA-directed RNA polymerase subunit alpha (383 aa).

Residues 1–240 are alpha N-terminal domain (alpha-NTD); that stretch reads MEKKTGLIQF…NLFHQISPPL (240 aa). The alpha C-terminal domain (alpha-CTD) stretch occupies residues 306 to 383; the sequence is IDKQMNDSVN…RFNMELLPTK (78 aa).

The protein belongs to the RNA polymerase alpha chain family. As to quaternary structure, in plastids the minimal PEP RNA polymerase catalytic core is composed of four subunits: alpha, beta, beta', and beta''. When a (nuclear-encoded) sigma factor is associated with the core the holoenzyme is formed, which can initiate transcription.

Its subcellular location is the plastid. The protein resides in the chloroplast. The catalysed reaction is RNA(n) + a ribonucleoside 5'-triphosphate = RNA(n+1) + diphosphate. In terms of biological role, DNA-dependent RNA polymerase catalyzes the transcription of DNA into RNA using the four ribonucleoside triphosphates as substrates. The polypeptide is DNA-directed RNA polymerase subunit alpha (Staurastrum punctulatum (Green alga)).